The following is a 207-amino-acid chain: dTTP/UTP pyrophosphatase (207 aa).

The Proton acceptor role is filled by aspartate 79.

It belongs to the Maf family. YhdE subfamily. Requires a divalent metal cation as cofactor.

The protein localises to the cytoplasm. The catalysed reaction is dTTP + H2O = dTMP + diphosphate + H(+). The enzyme catalyses UTP + H2O = UMP + diphosphate + H(+). Its function is as follows. Nucleoside triphosphate pyrophosphatase that hydrolyzes dTTP and UTP. May have a dual role in cell division arrest and in preventing the incorporation of modified nucleotides into cellular nucleic acids. The protein is dTTP/UTP pyrophosphatase of Rhodopseudomonas palustris (strain ATCC BAA-98 / CGA009).